The primary structure comprises 159 residues: Urease accessory protein UreE (159 aa).

The protein belongs to the UreE family.

The protein resides in the cytoplasm. In terms of biological role, involved in urease metallocenter assembly. Binds nickel. Probably functions as a nickel donor during metallocenter assembly. The polypeptide is Urease accessory protein UreE (Pseudomonas entomophila (strain L48)).